Consider the following 154-residue polypeptide: SsrA-binding protein (154 aa).

The disordered stretch occupies residues glycine 126–lysine 154. Residues aspartate 131–lysine 154 show a composition bias toward basic and acidic residues.

Belongs to the SmpB family.

The protein localises to the cytoplasm. Functionally, required for rescue of stalled ribosomes mediated by trans-translation. Binds to transfer-messenger RNA (tmRNA), required for stable association of tmRNA with ribosomes. tmRNA and SmpB together mimic tRNA shape, replacing the anticodon stem-loop with SmpB. tmRNA is encoded by the ssrA gene; the 2 termini fold to resemble tRNA(Ala) and it encodes a 'tag peptide', a short internal open reading frame. During trans-translation Ala-aminoacylated tmRNA acts like a tRNA, entering the A-site of stalled ribosomes, displacing the stalled mRNA. The ribosome then switches to translate the ORF on the tmRNA; the nascent peptide is terminated with the 'tag peptide' encoded by the tmRNA and targeted for degradation. The ribosome is freed to recommence translation, which seems to be the essential function of trans-translation. This Anoxybacillus flavithermus (strain DSM 21510 / WK1) protein is SsrA-binding protein.